We begin with the raw amino-acid sequence, 213 residues long: Cytochrome b6 (213 aa).

The chain crosses the membrane as a helical span at residues 30–50 (IFYCLGGLTLLCFIIQCLTGV). Residue Cys-33 participates in heme c binding. Residues His-84 and His-98 each contribute to the heme b site. 3 helical membrane passes run 88–108 (CQLM…TGAF), 114–134 (LNWV…FTGY), and 184–204 (LHVM…FIMI). Residues His-185 and His-200 each coordinate heme b.

Belongs to the cytochrome b family. PetB subfamily. The subunits of the cytochrome bc complex are a Rieske Fe-S protein (PetC), cytochrome b6 (PetB), subunit IV (PetD), and a diheme cytochrome c (PetX). The cofactor is heme b. It depends on heme c as a cofactor.

It is found in the cell membrane. Component of the cytochrome bc complex which donates electrons to the photosynthetic reaction center. The chain is Cytochrome b6 from Heliobacterium modesticaldum (strain ATCC 51547 / Ice1).